We begin with the raw amino-acid sequence, 111 residues long: Universal stress protein B (111 aa).

2 helical membrane passes run 1-21 and 90-110; these read MIST…NMAR and FILT…LMIW.

Belongs to the universal stress protein B family.

It is found in the cell inner membrane. This is Universal stress protein B from Klebsiella pneumoniae (strain 342).